The sequence spans 1084 residues: Siderophore biosynthesis regulatory protein URBS1 (1084 aa).

Disordered stretches follow at residues 1 to 164, 245 to 283, and 300 to 337; these read MALP…QSSS, AEEHAKMQRYSDEHPRAMNPTSRASYEHESRGMPYRDSY, and RPVHHADSSTNSPQYVPGDVYEHEGSGSPPAAHHAGMR. Low complexity predominate over residues 23-51; sequence QAAAASSSSSSSSSHHPPPRIAARPIAPA. 2 stretches are compositionally biased toward polar residues: residues 97 to 106 and 128 to 141; these read SHHNASSTAT and RSQSPIAAFRNRSQ. The span at 150–164 shows a compositional bias: low complexity; it reads PSRSQPNSPLLQSSS. The segment covering 245–260 has biased composition (basic and acidic residues); that stretch reads AEEHAKMQRYSDEHPR. Residues 338 to 362 form a GATA-type 1 zinc finger; sequence CSNCGVTSTPLWRRAPDGSTICNAC. Disordered regions lie at residues 372-405 and 442-472; these read HRSASNRLSGSDASPPTHEAKLAAAGPSCSREDD and VSKRESQTSEDPPPARTAERAPPVAEEKMDD. The segment covering 373–385 has biased composition (polar residues); sequence RSASNRLSGSDAS. The segment at 482-506 adopts a GATA-type 2 zinc-finger fold; that stretch reads CTNCQTTTTPLWRRDEDGNNICNAC. Disordered stretches follow at residues 559–595, 643–679, 692–803, 841–940, 953–1019, and 1040–1084; these read IAPAAGRNAGDSTPKSTESRRASKKSSLTSEQAMREA, RAGADTARTSHPDDSRSSKRPRQSYPLAPREAYDERD, THAA…TKLS, EAAG…SRRN, AAVP…DDHW, and ARPV…APRT. Composition is skewed to basic and acidic residues over residues 650–659 and 715–725; these read RTSHPDDSRS and RLGRSELHGES. A compositionally biased stretch (basic residues) spans 752-781; that stretch reads PHHHHHHHHHHANHASHAVHHGHHHHHHHP. Basic and acidic residues predominate over residues 875-888; the sequence is RGTRSGHDSIKQEA. The segment covering 961 to 970 has biased composition (polar residues); it reads SPPSTVSNPA. Residues 1070–1084 show a composition bias toward low complexity; the sequence is PVASSPSQAVSAPRT.

The protein localises to the nucleus. Its function is as follows. Involved in the regulation of secreted ferrichrome-type siderophores. Acts directly or indirectly to repress the biosynthesis of siderophores. The protein is Siderophore biosynthesis regulatory protein URBS1 (URBS1) of Mycosarcoma maydis (Corn smut fungus).